The sequence spans 90 residues: Probable Fe(2+)-trafficking protein (90 aa).

Belongs to the Fe(2+)-trafficking protein family.

In terms of biological role, could be a mediator in iron transactions between iron acquisition and iron-requiring processes, such as synthesis and/or repair of Fe-S clusters in biosynthetic enzymes. This is Probable Fe(2+)-trafficking protein from Chromobacterium violaceum (strain ATCC 12472 / DSM 30191 / JCM 1249 / CCUG 213 / NBRC 12614 / NCIMB 9131 / NCTC 9757 / MK).